The chain runs to 310 residues: Proline iminopeptidase (310 aa).

The AB hydrolase-1 domain occupies 33 to 290 (PVIFLHGGPG…RVVQAGHCAF (258 aa)). The active-site Nucleophile is the Ser107. Asp260 is an active-site residue. The Proton donor role is filled by His287.

The protein belongs to the peptidase S33 family.

It is found in the cytoplasm. The enzyme catalyses Release of N-terminal proline from a peptide.. In terms of biological role, hydrolyzes peptides having the structure Pro-Y-Z to yield free proline. Also hydrolyzes the dipeptide Pro-Gly. This chain is Proline iminopeptidase (pip), found in Neisseria gonorrhoeae.